We begin with the raw amino-acid sequence, 2514 residues long: Polyprotein P1234 (2514 aa).

In terms of domain architecture, Alphavirus-like MT spans 28-259 (EPKQVTPNDH…ESRKLLQSWH (232 aa)). The nsP1 membrane-binding stretch occupies residues 244–263 (GSTLYPESRKLLQSWHLPSV). S-palmitoyl cysteine; by host attachment occurs at residues Cys-417 and Cys-419. The region spanning 690–842 (DLTSPPYHEF…HNICTQVYHK (153 aa)) is the (+)RNA virus helicase ATP-binding domain. A ribonucleoside 5'-triphosphate is bound at residue 721–728 (GVPGSGKS). Positions 843 to 991 (SISRRCTLPV…IKEWEAEHAS (149 aa)) constitute a (+)RNA virus helicase C-terminal domain. The 324-residue stretch at 1004-1327 (DTFQNKANVC…NQLNAVYAGL (324 aa)) folds into the Peptidase C9 domain. The interval 1005–1024 (TFQNKANVCWAKCLVPILDT) is nucleolus localization signal. The active-site For cysteine protease nsP2 activity is Cys-1013. A Nuclear export signal motif is present at residues 1058-1067 (TRIYGVDLDS). His-1083 functions as the For cysteine protease nsP2 activity in the catalytic mechanism. A Nuclear localization signal motif is present at residues 1182–1186 (PTKRV). A Macro domain is found at 1334–1493 (APSYRVKRMD…KITEAISLRS (160 aa)). 6 residues coordinate ADP-D-ribose: Asp-1343, Asn-1357, Gly-1365, Gly-1445, Val-1446, and Tyr-1447. Residues Cys-1595, Cys-1597, Cys-1620, and Cys-1638 each coordinate Zn(2+). Short sequence motifs (FGDF; binding to host G3BP1) lie at residues 1852-1855 (FGDF) and 1870-1873 (FGDF). The RdRp catalytic domain occupies 2268–2383 (DAVLETDIAS…HGVVSDALMA (116 aa)).

As to quaternary structure, interacts with non-structural protein 3. Interacts with RNA-directed RNA polymerase nsP4. Interacts with protease nsP2. interacts with itself. Interacts with mRNA-capping enzyme nsP1. Interacts with host DDX1. Interacts with host DDX3. Interacts (via C-terminus) with host G3BP1; this interaction inhibits the formation of host stress granules on viral mRNAs and the nsp3-G3BP1 complexes bind viral RNAs and probably orchestrate the assembly of viral replication complexes. Interacts (via C-terminus) with host G3BP2; this interaction inhibits the formation of host stress granules on viral mRNAs and the nsp3-G3BP2 complexes bind viral RNAs and probably orchestrate the assembly of viral replication complexes. In terms of assembly, interacts with mRNA-capping enzyme nsP1. Interacts with protease nsP2. interacts with itself. As to quaternary structure, interacts with RNA-directed RNA polymerase nsP4. Interacts with mRNA-capping enzyme nsP1. Interacts with KPNA1/karyopherin-alpha1; this interaction probably allows the active transport of protease nsP2 into the host nucleus. Mg(2+) is required as a cofactor. It depends on Mn(2+) as a cofactor. Post-translationally, specific enzymatic cleavages in vivo yield mature proteins. The processing of the polyprotein is temporally regulated. In early stages (1.7 hpi), P1234 is first cleaved in trans through its nsP2 protease activity, releasing P123 and nsP4, which associate to form the early replication complex. At the same time, P1234 is also cut at the nsP1/nsP2 site early in infection but with lower efficiency. After replication of the viral minus-strand RNAs (4 hpi), the polyproteins are cut at the nsP1/nsP2 and nsP2/nsP3 sites very efficiently, preventing accumulation of P123 and P1234 and allowing the formation of the late replication complex. NsP3/nsP4 site is not cleaved anymore and P34 is produced rather than nsP4. Specific enzymatic cleavages in vivo yield mature proteins. The processing of the polyprotein is temporally regulated. In early stages (1.7 hpi), P123 is cleaved at the nsP1/nsP2 site with low efficiency. After replication of the viral minus-strand RNAs (4 hpi), the polyproteins are cut at the nsP1/nsP2 and nsP2/nsP3 sites very efficiently, preventing accumulation of P123 and allowing the formation of the late replication complex. In terms of processing, palmitoylated by host palmitoyltransferases ZDHHC2 and ZDHHC19. Post-translationally, phosphorylated by host on serines and threonines. Ubiquitinated; targets the protein for rapid degradation via the ubiquitin system. Nsp4 is present in extremely low quantities due to low frequency of translation through the amber stop-codon and the degradation by the ubiquitin pathway.

The protein resides in the host cytoplasmic vesicle membrane. It is found in the host cell membrane. Its subcellular location is the host cell projection. It localises to the host filopodium. The protein localises to the host nucleus. The protein resides in the host cytoplasm. The enzyme catalyses GTP + S-adenosyl-L-methionine = N(7)-methyl-GTP + S-adenosyl-L-homocysteine. It catalyses the reaction N(7)-methyl-GTP + L-histidyl-[protein] = N(tele)-(N(7)-methylguanosine 5'-phospho)-L-histidyl-[protein] + diphosphate. It carries out the reaction N(tele)-(N(7)-methylguanosine 5'-phospho)-L-histidyl-[protein] + a 5'-end diphospho-(purine-ribonucleoside) in mRNA + H(+) = a 5'-end (N(7)-methyl 5'-triphosphoguanosine)-(purine-ribonucleoside) in mRNA + L-histidyl-[protein]. The catalysed reaction is a 5'-end triphospho-ribonucleoside in mRNA + H2O = a 5'-end diphospho-ribonucleoside in mRNA + phosphate + H(+). The enzyme catalyses a ribonucleoside 5'-triphosphate + H2O = a ribonucleoside 5'-diphosphate + phosphate + H(+). It catalyses the reaction ATP + H2O = ADP + phosphate + H(+). It carries out the reaction RNA(n) + a ribonucleoside 5'-triphosphate = RNA(n+1) + diphosphate. The catalysed reaction is 4-O-(ADP-D-ribosyl)-L-aspartyl-[protein] + H2O = L-aspartyl-[protein] + ADP-D-ribose + H(+). The enzyme catalyses 5-O-(ADP-D-ribosyl)-L-glutamyl-[protein] + H2O = L-glutamyl-[protein] + ADP-D-ribose + H(+). It catalyses the reaction RNA(n) + ATP = RNA(n)-3'-adenine ribonucleotide + diphosphate. It carries out the reaction ADP-alpha-D-ribose 1''-phosphate + H2O = ADP-D-ribose + phosphate. Functionally, inactive precursor of the viral replicase, which is activated by cleavages carried out by the viral protease nsP2. Its function is as follows. The early replication complex formed by the polyprotein P123 and nsP4 synthesizes minus-strand RNAs. As soon P123 is cleaved into mature proteins, the plus-strand RNAs synthesis begins. Cytoplasmic capping enzyme that catalyzes two virus-specific reactions: methyltransferase and nsP1 guanylyltransferase. mRNA-capping is necessary since all viral RNAs are synthesized in the cytoplasm, and host capping enzymes are restricted to the nucleus. The enzymatic reaction involves a covalent link between 7-methyl-GMP and nsP1, whereas eukaryotic capping enzymes form a covalent complex only with GMP. nsP1 capping consists in the following reactions: GTP is first methylated into 7-methyl-GMP and then is covalently linked to nsP1 to form the m7GMp-nsP1 complex from which 7-methyl-GMP complex is transferred to the mRNA to create the cap structure. NsP1 is also needed for the initiation of the minus-strand RNAs synthesis. Probably serves as a membrane anchor for the replication complex composed of nsP1-nsP4. Palmitoylated nsP1 is remodeling host cell cytoskeleton, and induces filopodium-like structure formation at the surface of the host cell. In terms of biological role, multifunctional protein whose N-terminus is part of the RNA polymerase complex and displays NTPase, RNA triphosphatase and helicase activities. NTPase and RNA triphosphatase are involved in viral RNA capping and helicase keeps a check on the dsRNA replication intermediates. The C-terminus harbors a protease that specifically cleaves the polyproteins and releases the mature proteins. Required for the shutoff of minus-strand RNAs synthesis. Specifically inhibits the host IFN response by promoting the nuclear export of host STAT1. Also inhibits host transcription by inducing the rapid proteasome-dependent degradation of POLR2A, a catalytic subunit of the RNAPII complex. The resulting inhibition of cellular protein synthesis serves to ensure maximal viral gene expression and to evade host immune response. Functionally, seems to be essential for minus-strand RNAs and subgenomic 26S mRNAs synthesis. Displays mono-ADP-ribosylhydrolase activity. ADP-ribosylation is a post-translational modification that controls various processes of the host cell and the virus probably needs to revert it for optimal viral replication. Binds proteins of G3BP family and sequesters them into the viral RNA replication complexes thereby inhibiting the formation of host stress granules on viral mRNAs. The nsp3-G3BP complexes bind viral RNAs and probably orchestrate the assembly of viral replication complexes, thanks to the ability of G3BP family members to self-assemble and bind DNA. Its function is as follows. RNA dependent RNA polymerase. Replicates genomic and antigenomic RNA by recognizing replications specific signals. The early replication complex formed by the polyprotein P123 and nsP4 synthesizes minus-strand RNAs. The late replication complex composed of fully processed nsP1-nsP4 is responsible for the production of genomic and subgenomic plus-strand RNAs. This O'nyong-nyong virus (strain Gulu) (ONNV) protein is Polyprotein P1234.